The primary structure comprises 115 residues: Regulator of ribonuclease activity B (115 aa).

It belongs to the RraB family. Interacts with the C-terminal region of Rne.

It is found in the cytoplasm. Globally modulates RNA abundance by binding to RNase E (Rne) and regulating its endonucleolytic activity. Can modulate Rne action in a substrate-dependent manner by altering the composition of the degradosome. The protein is Regulator of ribonuclease activity B of Aeromonas salmonicida (strain A449).